A 324-amino-acid polypeptide reads, in one-letter code: NADH-ubiquinone oxidoreductase chain 1 (324 aa).

Transmembrane regions (helical) follow at residues 10 to 30 (MIMT…LTLV), 76 to 96 (FLFI…WTPL), 107 to 127 (LGLL…LWSG), 143 to 163 (VAQT…TIML), 178 to 198 (PMYL…STLA), 229 to 249 (LFFL…ITLF), 260 to 280 (ELFS…FLWI), and 300 to 320 (FLPL…SYAG).

This sequence belongs to the complex I subunit 1 family.

It localises to the mitochondrion inner membrane. The enzyme catalyses a ubiquinone + NADH + 5 H(+)(in) = a ubiquinol + NAD(+) + 4 H(+)(out). Functionally, core subunit of the mitochondrial membrane respiratory chain NADH dehydrogenase (Complex I) that is believed to belong to the minimal assembly required for catalysis. Complex I functions in the transfer of electrons from NADH to the respiratory chain. The immediate electron acceptor for the enzyme is believed to be ubiquinone. This chain is NADH-ubiquinone oxidoreductase chain 1 (MT-ND1), found in Coturnix japonica (Japanese quail).